Consider the following 237-residue polypeptide: D-aminoacyl-tRNA deacylase (237 aa).

Belongs to the DtdA deacylase family. As to quaternary structure, monomer. Zn(2+) serves as cofactor.

The catalysed reaction is a D-aminoacyl-tRNA + H2O = a tRNA + a D-alpha-amino acid + H(+). It catalyses the reaction glycyl-tRNA(Ala) + H2O = tRNA(Ala) + glycine + H(+). Its function is as follows. D-aminoacyl-tRNA deacylase with broad substrate specificity. By recycling D-aminoacyl-tRNA to D-amino acids and free tRNA molecules, this enzyme counteracts the toxicity associated with the formation of D-aminoacyl-tRNA entities in vivo. This is D-aminoacyl-tRNA deacylase from Sulfurisphaera tokodaii (strain DSM 16993 / JCM 10545 / NBRC 100140 / 7) (Sulfolobus tokodaii).